Consider the following 274-residue polypeptide: MNEHHQPFEEIKLINANGAEQWSARQLGKLLGYSEYRHFIPVLTRAKEACENSGHTIDDHFEEILDMVKIGSNAKRALKDIVLSRYACYLVVQNGDPAKPVIAAGQTYFAIQTRRQELADDEAFKQLREDEKRLFLRNELKEHNKQLVEAAQQAGVATATDFAIFQNHGYQGLYGGLDQKAIHQRKGLKKNQKILDHMGSTELAANLFRATQTEEKLKRDGVNSKQQANTTHFDVGRKVRQTIQELGGTMPEELPTPQVSIKQLENSVKITEKK.

The sequence is that of DNA damage-inducible protein D (dinD) from Escherichia coli (strain K12).